Consider the following 331-residue polypeptide: Ketol-acid reductoisomerase (NADP(+)) (331 aa).

The 181-residue stretch at 2–182 (ARLYYDADAN…GGTRAGILET (181 aa)) folds into the KARI N-terminal Rossmann domain. NADP(+) contacts are provided by residues 25–28 (YGSQ), Ser-51, Ser-53, and 83–86 (DEVQ). His-108 is a catalytic residue. NADP(+) is bound at residue Gly-134. The 146-residue stretch at 183 to 328 (TFREETETDL…KDLRAMFSWL (146 aa)) folds into the KARI C-terminal knotted domain. Residues Asp-191, Glu-195, Glu-227, and Glu-231 each contribute to the Mg(2+) site. Ser-252 is a binding site for substrate.

The protein belongs to the ketol-acid reductoisomerase family. Requires Mg(2+) as cofactor.

It carries out the reaction (2R)-2,3-dihydroxy-3-methylbutanoate + NADP(+) = (2S)-2-acetolactate + NADPH + H(+). It catalyses the reaction (2R,3R)-2,3-dihydroxy-3-methylpentanoate + NADP(+) = (S)-2-ethyl-2-hydroxy-3-oxobutanoate + NADPH + H(+). It participates in amino-acid biosynthesis; L-isoleucine biosynthesis; L-isoleucine from 2-oxobutanoate: step 2/4. The protein operates within amino-acid biosynthesis; L-valine biosynthesis; L-valine from pyruvate: step 2/4. In terms of biological role, involved in the biosynthesis of branched-chain amino acids (BCAA). Catalyzes an alkyl-migration followed by a ketol-acid reduction of (S)-2-acetolactate (S2AL) to yield (R)-2,3-dihydroxy-isovalerate. In the isomerase reaction, S2AL is rearranged via a Mg-dependent methyl migration to produce 3-hydroxy-3-methyl-2-ketobutyrate (HMKB). In the reductase reaction, this 2-ketoacid undergoes a metal-dependent reduction by NADPH to yield (R)-2,3-dihydroxy-isovalerate. This chain is Ketol-acid reductoisomerase (NADP(+)), found in Cyanothece sp. (strain PCC 7425 / ATCC 29141).